The primary structure comprises 381 residues: MLGNKMLSLPEQQPTLKIINSALVDLPVPANISIWWNFGSLLGLCLLIQIVIGLFLAMHYTAWVELAFSSVANICRDVNYGWLLRTVHANGASFFFICIYFHIGRGMYYGSFHYFETWMTGIALLFLVMAAAFLGYVLPWGQMSFWGATVITNLVSAVPYIGNDVVQWLWGGFAVDNPTLTRFFTFHFLIPFLVAGLTMIHLLFLHQSGSNNPLGINANLDKLPFHPYFTIKDTVGFMVLIFFLVTLSLTSPYLLGDPDNFIPANPLVTPAHIQPEWYFLFAYAILRSIPNKLGGVIALVSSILILVSLPFTFKPKFRGLEFYSVAQPLFWSWVSVFLLLTWIGARPVEDPYNFLGQILTCAYFSYFVFTPIVINLNDKIV.

The next 4 membrane-spanning stretches (helical) occupy residues 38–58, 82–103, 118–138, and 183–203; these read FGSLLGLCLLIQIVIGLFLAM, WLLRTVHANGASFFFICIYFHI, WMTGIALLFLVMAAAFLGYVL, and FFTFHFLIPFLVAGLTMIHLL. Heme b is bound by residues His-88 and His-102. Positions 187 and 201 each coordinate heme b. His-206 contributes to the a ubiquinone binding site. A run of 4 helical transmembrane segments spans residues 231–251, 293–313, 325–345, and 352–372; these read IKDTVGFMVLIFFLVTLSLTS, LGGVIALVSSILILVSLPFTF, VAQPLFWSWVSVFLLLTWIGA, and YNFLGQILTCAYFSYFVFTPI.

This sequence belongs to the cytochrome b family. As to quaternary structure, the main subunits of complex b-c1 are: cytochrome b, cytochrome c1 and the Rieske protein. It depends on heme b as a cofactor.

The protein localises to the mitochondrion inner membrane. In terms of biological role, component of the ubiquinol-cytochrome c reductase complex (complex III or cytochrome b-c1 complex) that is part of the mitochondrial respiratory chain. The b-c1 complex mediates electron transfer from ubiquinol to cytochrome c. Contributes to the generation of a proton gradient across the mitochondrial membrane that is then used for ATP synthesis. This chain is Cytochrome b (MT-CYB), found in Artemia franciscana (Brine shrimp).